The sequence spans 736 residues: Elongation factor 2 (736 aa).

Residues 18 to 261 enclose the tr-type G domain; sequence EQIRNIGITA…MVVKHIPNPR (244 aa). Residues 27-34, 93-97, and 147-150 each bind GTP; these read AHVDHGKT, DTPGH, and NKID. His602 is modified (diphthamide).

This sequence belongs to the TRAFAC class translation factor GTPase superfamily. Classic translation factor GTPase family. EF-G/EF-2 subfamily.

The protein localises to the cytoplasm. Functionally, catalyzes the GTP-dependent ribosomal translocation step during translation elongation. During this step, the ribosome changes from the pre-translocational (PRE) to the post-translocational (POST) state as the newly formed A-site-bound peptidyl-tRNA and P-site-bound deacylated tRNA move to the P and E sites, respectively. Catalyzes the coordinated movement of the two tRNA molecules, the mRNA and conformational changes in the ribosome. This Desulfurococcus amylolyticus (strain DSM 18924 / JCM 16383 / VKM B-2413 / 1221n) (Desulfurococcus kamchatkensis) protein is Elongation factor 2.